Here is a 547-residue protein sequence, read N- to C-terminus: MLVRFGRRSGQAKESAEMKNCEEDPVLYPPLLPTKVDLRQVTIIPHNEWERIRDSLDSLTREAACLRAERKAKKEMHLRSQEVVKHWTNTYAGMKEQKLEAKKKRDEEIEAERQILDIEEAIYKQGERKKAIELAKQYQFYQTERVKNFHSGLLLSRVMKERDAQIEFQKSKIKSDKKWEEQVKLNVEKAFKEEREKAEKQRRERVALAKDHLKQIKEHEEEEERRRKEEEKDAEEIKRQNSLYEIEMKKKQGKKKEEINESRRLFFEHLNDKHIIKAVEQQQQEEEDEKIRKFIKAKKRLTQMGKEKEAETHRLMEERRKRINNFLSKLMKEKFDNEDLIIARDIAEAEAEWEKREREKYEKNKAELKAIAEHRALVMKNKEEEERQRKIEATEQMLAILKADQIFWEHEKEKKQKADKERREVQDAHIQQMAKHKFNALQAKQAESEYCRLTEALVAEKEKEFQDYAREVIESESESTKKYIYPLVKAVQEGPGGGRGPVLVDRGGLRPSYQANDTTGVQLPFYNSPGSKYNNFQKSKGRLGFTW.

Residues 184–254 (KLNVEKAFKE…EIEMKKKQGK (71 aa)) adopt a coiled-coil conformation. Residues 210–237 (KDHLKQIKEHEEEEERRRKEEEKDAEEI) are disordered.

As to quaternary structure, microtubule inner protein component of sperm flagellar doublet microtubules. As to expression, expressed in trachea multiciliated cells.

Its subcellular location is the cytoplasm. The protein localises to the cytoskeleton. The protein resides in the cilium axoneme. It localises to the flagellum axoneme. In terms of biological role, microtubule inner protein (MIP) part of the dynein-decorated doublet microtubules (DMTs) in cilia axoneme, which is required for motile cilia beating. The polypeptide is Cilia- and flagella- associated protein 210 (CFAP210) (Bos taurus (Bovine)).